Consider the following 989-residue polypeptide: ATP-dependent 6-phosphofructokinase subunit alpha (989 aa).

The N-terminal catalytic PFK domain 1 stretch occupies residues 1–585 (MPEPSISDLS…SYENFLSVSK (585 aa)). ATP-binding positions include Gly-220, 283–284 (RC), and 313–316 (GDGS). Asp-314 is a binding site for Mg(2+). Residues 359-361 (SID), Arg-396, 403-405 (MGR), Glu-460, Arg-487, and 493-496 (HVQR) each bind beta-D-fructose 6-phosphate. The Proton acceptor role is filled by Asp-361. An interdomain linker region spans residues 586 to 599 (YDDGSYLVPESSRL). The tract at residues 600-989 (NIAIIHVGAP…LSGRLSIRTT (390 aa)) is C-terminal regulatory PFK domain 2. Beta-D-fructose 2,6-bisphosphate contacts are provided by residues Arg-670, 727–731 (TVSNN), Arg-765, 772–774 (QGG), Glu-832, Arg-858, 864–867 (HVQQ), and Arg-963.

The protein belongs to the phosphofructokinase type A (PFKA) family. ATP-dependent PFK group I subfamily. Eukaryotic two domain clade 'E' sub-subfamily. In terms of assembly, heterododecamer of 4 alpha, 4 beta and 4 gamma chains. Mg(2+) is required as a cofactor.

It localises to the cytoplasm. It carries out the reaction beta-D-fructose 6-phosphate + ATP = beta-D-fructose 1,6-bisphosphate + ADP + H(+). The protein operates within carbohydrate degradation; glycolysis; D-glyceraldehyde 3-phosphate and glycerone phosphate from D-glucose: step 3/4. Allosterically activated by ADP, AMP, or fructose 2,6-bisphosphate, and allosterically inhibited by ATP or citrate. Its function is as follows. Catalyzes the phosphorylation of D-fructose 6-phosphate to fructose 1,6-bisphosphate by ATP, the first committing step of glycolysis. The protein is ATP-dependent 6-phosphofructokinase subunit alpha (PFK1) of Komagataella pastoris (Yeast).